The sequence spans 308 residues: 1-acyl-sn-glycerol-3-phosphate acyltransferase (308 aa).

The next 3 membrane-spanning stretches (helical) occupy residues 65-85, 124-144, and 148-168; these read FLSMMVTTIVWNMIMLILLPW, AIYICNHASLVDIFLIMWLIP, and VTIAKKEIIWYPLFGQLYVLA. The HXXXXD motif signature appears at 130–135; sequence HASLVD.

Belongs to the 1-acyl-sn-glycerol-3-phosphate acyltransferase family.

Its subcellular location is the membrane. It catalyses the reaction a 1-acyl-sn-glycero-3-phosphate + an acyl-CoA = a 1,2-diacyl-sn-glycero-3-phosphate + CoA. Functionally, converts lysophosphatidic acid (LPA) into phosphatidic acid by incorporating acyl moiety at the 2 position. This enzyme shows a preference for medium-chain-length fatty acyl-coenzyme a substrates. In Cocos nucifera (Coconut palm), this protein is 1-acyl-sn-glycerol-3-phosphate acyltransferase.